The following is a 94-amino-acid chain: PqqA binding protein (94 aa).

It belongs to the PqqD family. As to quaternary structure, monomer. Interacts with PqqE.

It functions in the pathway cofactor biosynthesis; pyrroloquinoline quinone biosynthesis. Its function is as follows. Functions as a PqqA binding protein and presents PqqA to PqqE, in the pyrroloquinoline quinone (PQQ) biosynthetic pathway. The polypeptide is PqqA binding protein (Acinetobacter baumannii (strain AB307-0294)).